A 974-amino-acid chain; its full sequence is Alpha-1,4 glucan phosphorylase L-2 isozyme, chloroplastic/amyloplastic (974 aa).

A chloroplast-targeting transit peptide spans 1-81 (MATFAVSGLN…LDVFQPDSTS (81 aa)). The disordered stretch occupies residues 509–551 (ADVEKAADEEQEEEGKDDSKDEETEAVKAETTNEEEETEVKKV). Residues 517–532 (EEQEEEGKDDSKDEET) are compositionally biased toward acidic residues. K820 carries the N6-(pyridoxal phosphate)lysine modification.

It belongs to the glycogen phosphorylase family. Pyridoxal 5'-phosphate serves as cofactor. Leaves.

It localises to the plastid. The protein localises to the chloroplast. It is found in the amyloplast. The enzyme catalyses [(1-&gt;4)-alpha-D-glucosyl](n) + phosphate = [(1-&gt;4)-alpha-D-glucosyl](n-1) + alpha-D-glucose 1-phosphate. Functionally, phosphorylase is an important allosteric enzyme in carbohydrate metabolism. Enzymes from different sources differ in their regulatory mechanisms and in their natural substrates. However, all known phosphorylases share catalytic and structural properties. This chain is Alpha-1,4 glucan phosphorylase L-2 isozyme, chloroplastic/amyloplastic (STP-1), found in Solanum tuberosum (Potato).